The sequence spans 212 residues: LexA repressor (212 aa).

The segment at residues 26 to 46 is a DNA-binding region (H-T-H motif); the sequence is VREIGEAVGLSSTSTVHGHID. Catalysis depends on for autocatalytic cleavage activity residues Ser-128 and Lys-171.

It belongs to the peptidase S24 family. Homodimer.

It catalyses the reaction Hydrolysis of Ala-|-Gly bond in repressor LexA.. Represses a number of genes involved in the response to DNA damage (SOS response), including recA and lexA. In the presence of single-stranded DNA, RecA interacts with LexA causing an autocatalytic cleavage which disrupts the DNA-binding part of LexA, leading to derepression of the SOS regulon and eventually DNA repair. The protein is LexA repressor of Oenococcus oeni (strain ATCC BAA-331 / PSU-1).